A 130-amino-acid chain; its full sequence is Protein TraH (130 aa).

Residues 1–78 (MSEPKDQSIE…ALEENRRPKA (78 aa)) form a disordered region. Residues 37-54 (PEQATAGQPPAEATAPTP) show a composition bias toward low complexity.

Functionally, the initiation process of transfer DNA synthesis requires the interaction of at least three plasmid-specific components (TraH, TraI, and TraJ) at the transfer origin resulting in the assembly of a specialized nucleoprotein complex - the relaxosome. This chain is Protein TraH (traH), found in Escherichia coli.